The primary structure comprises 584 residues: MAVGKIVISVASMLLVVGVAIGVVTFVNKGGGAGGDKTLNSHQKAVESLCASATDKGSCAKTLDPVKSDDPSKLIKAFMLATKDAVTKSTNFTASTEEGMGKNINATSKAVLDYCKRVLMYALEDLETIVEEMGEDLQQSGSKMDQLKQWLTGVFNYQTDCIDDIEESELRKVMGEGIAHSKILSSNAIDIFHALTTAMSQMNVKVDDMKKGNLGETPAPDRDLLEDLDQKGLPKWHSDKDRKLMAQAGRPGAPADEGIGEGGGGGGKIKPTHVVAKDGSGQFKTISEAVKACPEKNPGRCIIYIKAGVYKEQVTIPKKVNNVFMFGDGATQTIITFDRSVGLSPGTTTSLSGTVQVESEGFMAKWIGFQNTAGPLGHQAVAFRVNGDRAVIFNCRFDGYQDTLYVNNGRQFYRNIVVSGTVDFIFGKSATVIQNSLILCRKGSPGQTNHVTADGNEKGKAVKIGIVLHNCRIMADKELEADRLTVKSYLGRPWKPFATTAVIGTEIGDLIQPTGWNEWQGEKFHLTATYVEFNNRGPGANTAARVPWAKMAKSAAEVERFTVANWLTPANWIQEANVPVQLGL.

An N-terminal signal peptide occupies residues 1-22; sequence MAVGKIVISVASMLLVVGVAIG. The tract at residues 40–191 is pectinesterase inhibitor; sequence NSHQKAVESL…KILSSNAIDI (152 aa). 2 N-linked (GlcNAc...) asparagine glycosylation sites follow: Asn91 and Asn105. Residues 246–267 form a disordered region; it reads AQAGRPGAPADEGIGEGGGGGG. Residues 272 to 571 are pectinesterase; that stretch reads THVVAKDGSG…TVANWLTPAN (300 aa). Residues Thr349 and Gln379 each contribute to the substrate site. Asp402 serves as the catalytic Proton donor; for pectinesterase activity. Asp423 (nucleophile; for pectinesterase activity) is an active-site residue. Substrate contacts are provided by Arg492 and Trp494.

The protein in the N-terminal section; belongs to the PMEI family. It in the C-terminal section; belongs to the pectinesterase family. In terms of tissue distribution, pollen, and at much lower levels in pistils and petals.

The protein localises to the secreted. The protein resides in the cell wall. The catalysed reaction is [(1-&gt;4)-alpha-D-galacturonosyl methyl ester](n) + n H2O = [(1-&gt;4)-alpha-D-galacturonosyl](n) + n methanol + n H(+). The protein operates within glycan metabolism; pectin degradation; 2-dehydro-3-deoxy-D-gluconate from pectin: step 1/5. Acts in the modification of cell walls via demethylesterification of cell wall pectin. The polypeptide is Probable pectinesterase/pectinesterase inhibitor (BP19) (Brassica napus (Rape)).